A 217-amino-acid chain; its full sequence is Thiopurine S-methyltransferase (217 aa).

Residues Trp-11, Leu-46, Glu-67, and Arg-122 each coordinate S-adenosyl-L-methionine.

It belongs to the class I-like SAM-binding methyltransferase superfamily. TPMT family.

The protein resides in the cytoplasm. It catalyses the reaction S-adenosyl-L-methionine + a thiopurine = S-adenosyl-L-homocysteine + a thiopurine S-methylether.. The protein is Thiopurine S-methyltransferase of Vibrio vulnificus (strain YJ016).